The sequence spans 1182 residues: Tyrosine-protein kinase ABL2 (1182 aa).

The disordered stretch occupies residues 1–42; it reads MGQQVGRVGEAPGLQQPQPRGIRGSSAARPSGRRRDPAGRTA. The N-myristoyl glycine moiety is linked to residue Gly-2. The interval 2–106 is CAP; sequence GQQVGRVGEA…SKENLLGATE (105 aa). Positions 20–30 are enriched in low complexity; that stretch reads RGIRGSSAARP. Ser-97 carries the phosphoserine modification. Residues 107-167 enclose the SH3 domain; it reads SDPNLFVALY…PSNYITPVNS (61 aa). Residues Tyr-116, Tyr-161, Tyr-174, Tyr-185, Tyr-218, and Tyr-231 each carry the phosphotyrosine modification. The 91-residue stretch at 173 to 263 folds into the SH2 domain; that stretch reads WYHGPVSRSA…GLVTTLHYPA (91 aa). Tyr-261 carries the post-translational modification Phosphotyrosine; by ABL1 and autocatalysis. Tyr-272 bears the Phosphotyrosine; by autocatalysis mark. Ser-275 is subject to Phosphoserine. The 252-residue stretch at 288 to 539 folds into the Protein kinase domain; sequence ITMKHKLGGG…PSFAETHQAF (252 aa). An ATP-binding site is contributed by 294-302; it reads LGGGQYGEV. Phosphotyrosine occurs at positions 299 and 303. Residues Lys-317 and 362 to 368 contribute to the ATP site; that span reads EYMPYGN. The active-site Proton acceptor is Asp-409. Positions 427–451 match the Kinase activation loop motif; the sequence is DFGLSRLMTGDTYTAHAGAKFPIKW. At Tyr-439 the chain carries Phosphotyrosine; by autocatalysis and SRC-type Tyr-kinases. A Phosphotyrosine modification is found at Tyr-459. Tyr-568 carries the phosphotyrosine; by autocatalysis modification. Residues Ser-606, Ser-621, Ser-632, Ser-634, and Ser-656 each carry the phosphoserine modification. Disordered stretches follow at residues 612–642 and 655–674; these read IRST…DAKE and SSFM…SSFR. The Nuclear localization signal motif lies at 659 to 661; sequence KKR. A phosphoserine mark is found at Ser-670, Ser-671, and Ser-672. At Tyr-684 the chain carries Phosphotyrosine; by autocatalysis. An F-actin-binding region spans residues 695–930; the sequence is SLQNADGFSV…AVLPTTHNHK (236 aa). The residue at position 719 (Tyr-719) is a Phosphotyrosine. A disordered region spans residues 765–796; sequence LRAGKPTASDDTSKPFPRSNSTSSMSSGLPEQ. Lys-778 carries the N6-acetyllysine modification. Positions 782 to 793 are enriched in polar residues; sequence RSNSTSSMSSGL. At Ser-785 the chain carries Phosphoserine. Position 802 is a phosphothreonine (Thr-802). Over residues 809–825 the composition is skewed to polar residues; the sequence is RSKLQLERTVSTSSQPE. The disordered stretch occupies residues 809 to 858; sequence RSKLQLERTVSTSSQPEENVDRANDMLPKKSEEGAAPARERPKAKLLPRG. 2 positions are modified to phosphoserine: Ser-819 and Ser-822. The span at 827 to 851 shows a compositional bias: basic and acidic residues; that stretch reads NVDRANDMLPKKSEEGAAPARERPK. Phosphoserine is present on residues Ser-915 and Ser-936. A disordered region spans residues 964–1059; that stretch reads HQVTSSGDKD…TSSISPAKMA (96 aa). Positions 1020 to 1182 are F-actin-binding; that stretch reads EGGKKAAPGP…VQEISDVVQR (163 aa).

Belongs to the protein kinase superfamily. Tyr protein kinase family. ABL subfamily. As to quaternary structure, interacts with PSMA7. Interacts with CTTN. Found in a complex with ABL1, ABL2, CRK and UNC119; leading to the inhibition of CRK phosphorylation by ABL kinases. Requires Mg(2+) as cofactor. Mn(2+) is required as a cofactor. Phosphorylated at Tyr-261 by ABL1 in response to oxidative stress. Phosphorylated by PDGFRB. Post-translationally, polyubiquitinated. Polyubiquitination of ABL2 leads to degradation. Most abundant in adult mouse brain, especially in synapse-rich regions.

The protein resides in the cytoplasm. It is found in the cytoskeleton. It catalyses the reaction L-tyrosyl-[protein] + ATP = O-phospho-L-tyrosyl-[protein] + ADP + H(+). With respect to regulation, stabilized in the inactive form by an association between the SH3 domain and the SH2-TK linker region, interactions of the N-terminal cap, and contributions from an N-terminal myristoyl group and phospholipids. Activated by autophosphorylation as well as by SRC-family kinase-mediated phosphorylation. Activated by RIN1 binding to the SH2 and SH3 domains. Inhibited by imatinib mesylate (Gleevec). Phosphatidylinositol 4,5-bisphosphate (PIP2), a highly abundant phosphoinositide known to regulate cytoskeletal and membrane proteins, inhibits the tyrosine kinase activity. Its function is as follows. Non-receptor tyrosine-protein kinase that plays an ABL1-overlapping role in key processes linked to cell growth and survival such as cytoskeleton remodeling in response to extracellular stimuli, cell motility and adhesion, receptor endocytosis, autophagy, DNA damage response and apoptosis. Coordinates actin remodeling through tyrosine phosphorylation of proteins controlling cytoskeleton dynamics like MYH10 (involved in movement); CTTN (involved in signaling); or TUBA1 and TUBB (microtubule subunits). Binds directly F-actin and regulates actin cytoskeletal structure through its F-actin-bundling activity. Involved in the regulation of cell adhesion and motility through phosphorylation of key regulators of these processes such as CRK, CRKL or DOK1. Required for adhesion-dependent phosphorylation of ARHGAP35 which promotes its association with RASA1, resulting in recruitment of ARHGAP35 to the cell periphery where it inhibits RHO. Phosphorylates multiple receptor tyrosine kinases like PDGFRB and other substrates which are involved in endocytosis regulation such as RIN1. In brain, may regulate neurotransmission by phosphorylating proteins at the synapse. Finally, functions as its own regulator through autocatalytic activity as well as through phosphorylation of its inhibitor, ABI1. Positively regulates chemokine-mediated T-cell migration, polarization, and homing to lymph nodes and immune-challenged tissues, potentially via activation of NEDD9/HEF1 and RAP1. The protein is Tyrosine-protein kinase ABL2 of Mus musculus (Mouse).